Consider the following 159-residue polypeptide: Serine-protein kinase RsbW (159 aa).

It belongs to the anti-sigma-factor family.

The enzyme catalyses L-seryl-[protein] + ATP = O-phospho-L-seryl-[protein] + ADP + H(+). The catalysed reaction is L-threonyl-[protein] + ATP = O-phospho-L-threonyl-[protein] + ADP + H(+). Negative regulator of sigma-B activity. Phosphorylates and inactivates its specific antagonist protein, RsbV. Upon phosphorylation of RsbV, RsbW is released and binds to sigma-B, thereby blocking its ability to form an RNA polymerase holoenzyme (E-sigma-B). In Staphylococcus epidermidis, this protein is Serine-protein kinase RsbW.